Consider the following 229-residue polypeptide: MNGAVPMLAIDGPSGAGKGTVAGLLARRLGWNLLDSGALYRLLAFAAVNHGVDLTNEEALKVLAAHLDVQFVAADGSHGQRIILEGEEVTDVIRTEQVGAGASQVAALPAVRDALLQRQRAFREAPGLVADGRDMGTVVFPDAPLKIFLTASAEERARRRYLQLKAKGADVDQSALLEEIRERDERDSQRAVAPLKPADDAILLDSTEMSIEAVVETIIRHCERQGWDV.

Residue 12-20 (GPSGAGKGT) coordinates ATP.

The protein belongs to the cytidylate kinase family. Type 1 subfamily.

The protein resides in the cytoplasm. It carries out the reaction CMP + ATP = CDP + ADP. The enzyme catalyses dCMP + ATP = dCDP + ADP. The chain is Cytidylate kinase from Pseudomonas aeruginosa (strain UCBPP-PA14).